A 159-amino-acid polypeptide reads, in one-letter code: uncharacterized protein (159 aa).

It to M.jannaschii MJECL20.

This is an uncharacterized protein from Methanocaldococcus jannaschii (strain ATCC 43067 / DSM 2661 / JAL-1 / JCM 10045 / NBRC 100440) (Methanococcus jannaschii).